We begin with the raw amino-acid sequence, 267 residues long: Tryptophan synthase alpha chain (267 aa).

Catalysis depends on proton acceptor residues Glu-49 and Asp-60.

Belongs to the TrpA family. In terms of assembly, tetramer of two alpha and two beta chains.

It carries out the reaction (1S,2R)-1-C-(indol-3-yl)glycerol 3-phosphate + L-serine = D-glyceraldehyde 3-phosphate + L-tryptophan + H2O. It participates in amino-acid biosynthesis; L-tryptophan biosynthesis; L-tryptophan from chorismate: step 5/5. Functionally, the alpha subunit is responsible for the aldol cleavage of indoleglycerol phosphate to indole and glyceraldehyde 3-phosphate. In Pelobacter propionicus (strain DSM 2379 / NBRC 103807 / OttBd1), this protein is Tryptophan synthase alpha chain.